Consider the following 432-residue polypeptide: Probable exopolygalacturonase X (432 aa).

Residues 1–23 (MKFSYSFVQVVSLLLSLSPSVEG) form the signal peptide. Asn-113, Asn-129, and Asn-199 each carry an N-linked (GlcNAc...) asparagine glycan. One copy of the PbH1 1 repeat lies at 231–252 (SDNIVIQNSVINNGDDCVSFKP). Asp-245 serves as the catalytic Proton donor. Cys-247 and Cys-264 form a disulfide bridge. Residues Asn-253 and Asn-265 are each glycosylated (N-linked (GlcNAc...) asparagine). 3 PbH1 repeats span residues 254–274 (STNI…SVGS), 285–306 (VQNV…RIKV), and 327–348 (VKNI…EVTQ). Residue His-268 is part of the active site. N-linked (GlcNAc...) asparagine glycans are attached at residues Asn-292, Asn-297, Asn-329, Asn-354, and Asn-364. Residues 362 to 394 (PSNLTISDIHFKNFRGTTSGKRDPDVGTIVCSS) form a PbH1 5 repeat. The cysteines at positions 392 and 398 are disulfide-linked.

The protein belongs to the glycosyl hydrolase 28 family.

The protein localises to the secreted. The catalysed reaction is [(1-&gt;4)-alpha-D-galacturonosyl](n) + H2O = alpha-D-galacturonate + [(1-&gt;4)-alpha-D-galacturonosyl](n-1). Specific in hydrolyzing the terminal glycosidic bond of polygalacturonic acid and oligogalacturonates. This chain is Probable exopolygalacturonase X (pgaX), found in Neosartorya fischeri (strain ATCC 1020 / DSM 3700 / CBS 544.65 / FGSC A1164 / JCM 1740 / NRRL 181 / WB 181) (Aspergillus fischerianus).